A 75-amino-acid chain; its full sequence is Exodeoxyribonuclease 7 small subunit (75 aa).

The protein belongs to the XseB family. Heterooligomer composed of large and small subunits.

Its subcellular location is the cytoplasm. The enzyme catalyses Exonucleolytic cleavage in either 5'- to 3'- or 3'- to 5'-direction to yield nucleoside 5'-phosphates.. In terms of biological role, bidirectionally degrades single-stranded DNA into large acid-insoluble oligonucleotides, which are then degraded further into small acid-soluble oligonucleotides. The sequence is that of Exodeoxyribonuclease 7 small subunit from Citrifermentans bemidjiense (strain ATCC BAA-1014 / DSM 16622 / JCM 12645 / Bem) (Geobacter bemidjiensis).